Reading from the N-terminus, the 81-residue chain is Cell division protein ZapB (81 aa).

Residues 5–81 (LEVFEKLESK…QALLGRMEEV (77 aa)) adopt a coiled-coil conformation. Residues 43 to 64 (VQSAQHGREELERENSQLKEQQ) form a disordered region. A compositionally biased stretch (basic and acidic residues) spans 48-59 (HGREELERENSQ).

The protein belongs to the ZapB family. In terms of assembly, homodimer. The ends of the coiled-coil dimer bind to each other, forming polymers. Interacts with FtsZ.

Its subcellular location is the cytoplasm. Functionally, non-essential, abundant cell division factor that is required for proper Z-ring formation. It is recruited early to the divisome by direct interaction with FtsZ, stimulating Z-ring assembly and thereby promoting cell division earlier in the cell cycle. Its recruitment to the Z-ring requires functional FtsA or ZipA. This Klebsiella pneumoniae subsp. pneumoniae (strain ATCC 700721 / MGH 78578) protein is Cell division protein ZapB.